Here is a 95-residue protein sequence, read N- to C-terminus: Aspartyl/glutamyl-tRNA(Asn/Gln) amidotransferase subunit C (95 aa).

The protein belongs to the GatC family. In terms of assembly, heterotrimer of A, B and C subunits.

The catalysed reaction is L-glutamyl-tRNA(Gln) + L-glutamine + ATP + H2O = L-glutaminyl-tRNA(Gln) + L-glutamate + ADP + phosphate + H(+). It catalyses the reaction L-aspartyl-tRNA(Asn) + L-glutamine + ATP + H2O = L-asparaginyl-tRNA(Asn) + L-glutamate + ADP + phosphate + 2 H(+). Functionally, allows the formation of correctly charged Asn-tRNA(Asn) or Gln-tRNA(Gln) through the transamidation of misacylated Asp-tRNA(Asn) or Glu-tRNA(Gln) in organisms which lack either or both of asparaginyl-tRNA or glutaminyl-tRNA synthetases. The reaction takes place in the presence of glutamine and ATP through an activated phospho-Asp-tRNA(Asn) or phospho-Glu-tRNA(Gln). The chain is Aspartyl/glutamyl-tRNA(Asn/Gln) amidotransferase subunit C from Chelativorans sp. (strain BNC1).